Consider the following 160-residue polypeptide: Nuclear transcription factor Y subunit B-5 (160 aa).

A DNA-binding region spans residues 56-62; it reads LPIANVG. Residues 83-94 are subunit association domain (SAD); sequence MQECVSEFISFV.

This sequence belongs to the NFYB/HAP3 subunit family. As to quaternary structure, heterotrimeric transcription factor composed of three components, NF-YA, NF-YB and NF-YC. NF-YB and NF-YC must interact and dimerize for NF-YA association and DNA binding. In terms of tissue distribution, expressed in flowers and siliques.

The protein localises to the nucleus. Its function is as follows. Component of the NF-Y/HAP transcription factor complex. The NF-Y complex stimulates the transcription of various genes by recognizing and binding to a CCAAT motif in promoters. This Arabidopsis thaliana (Mouse-ear cress) protein is Nuclear transcription factor Y subunit B-5 (NFYB5).